A 351-amino-acid chain; its full sequence is UDP-N-acetylglucosamine--N-acetylmuramyl-(pentapeptide) pyrophosphoryl-undecaprenol N-acetylglucosamine transferase (351 aa).

UDP-N-acetyl-alpha-D-glucosamine-binding positions include 11 to 13 (TGG), Asn120, Arg161, Ser187, and Gln281.

It belongs to the glycosyltransferase 28 family. MurG subfamily.

It localises to the cell inner membrane. The catalysed reaction is di-trans,octa-cis-undecaprenyl diphospho-N-acetyl-alpha-D-muramoyl-L-alanyl-D-glutamyl-meso-2,6-diaminopimeloyl-D-alanyl-D-alanine + UDP-N-acetyl-alpha-D-glucosamine = di-trans,octa-cis-undecaprenyl diphospho-[N-acetyl-alpha-D-glucosaminyl-(1-&gt;4)]-N-acetyl-alpha-D-muramoyl-L-alanyl-D-glutamyl-meso-2,6-diaminopimeloyl-D-alanyl-D-alanine + UDP + H(+). The protein operates within cell wall biogenesis; peptidoglycan biosynthesis. Functionally, cell wall formation. Catalyzes the transfer of a GlcNAc subunit on undecaprenyl-pyrophosphoryl-MurNAc-pentapeptide (lipid intermediate I) to form undecaprenyl-pyrophosphoryl-MurNAc-(pentapeptide)GlcNAc (lipid intermediate II). This Rippkaea orientalis (strain PCC 8801 / RF-1) (Cyanothece sp. (strain PCC 8801)) protein is UDP-N-acetylglucosamine--N-acetylmuramyl-(pentapeptide) pyrophosphoryl-undecaprenol N-acetylglucosamine transferase.